The chain runs to 499 residues: Alpha-L-arabinofuranosidase B (499 aa).

The first 17 residues, 1–17, serve as a signal peptide directing secretion; that stretch reads MFSRRNLLALGLAATVS. The catalytic stretch occupies residues 18–335; it reads AGPCDIYEAG…ENIVAAKYVV (318 aa). 3 disulfides stabilise this stretch: Cys-21-Cys-31, Cys-81-Cys-86, and Cys-176-Cys-177. An N-linked (GlcNAc...) asparagine glycan is attached at Asn-83. N-linked (GlcNAc...) asparagine glycosylation is present at Asn-202. Asp-219 is a binding site for substrate. Catalysis depends on Glu-221, which acts as the Nucleophile. Residues Asn-222, Asn-223, and Gly-296 each contribute to the substrate site. Asp-297 (proton donor) is an active-site residue. Residues 336 to 499 form an ABD region; the sequence is GSLVSGPSFT…SFEIETAFAS (164 aa). A disulfide bridge connects residues Cys-401 and Cys-439. 8 residues coordinate substrate: His-416, Asn-418, Phe-419, Asp-435, His-463, Glu-465, Leu-468, and Asp-488.

Belongs to the glycosyl hydrolase 54 family.

Its subcellular location is the secreted. It catalyses the reaction Hydrolysis of terminal non-reducing alpha-L-arabinofuranoside residues in alpha-L-arabinosides.. It functions in the pathway glycan metabolism; L-arabinan degradation. Its function is as follows. Alpha-L-arabinofuranosidase involved in the degradation of arabinoxylan, a major component of plant hemicellulose. Able to hydrolyze 1,5-, 1,3- and 1,2-alpha-linkages not only in L-arabinofuranosyl oligosaccharides, but also in polysaccharides containing terminal non-reducing L-arabinofuranoses in side chains, like L-arabinan, arabinogalactan and arabinoxylan. This Aspergillus kawachii (strain NBRC 4308) (White koji mold) protein is Alpha-L-arabinofuranosidase B (abfB).